Reading from the N-terminus, the 186-residue chain is Threonylcarbamoyl-AMP synthase (186 aa).

The 184-residue stretch at 3 to 186 (ELTLDSAVAT…DALSGNVLRS (184 aa)) folds into the YrdC-like domain.

The protein belongs to the SUA5 family. TsaC subfamily.

The protein localises to the cytoplasm. The catalysed reaction is L-threonine + hydrogencarbonate + ATP = L-threonylcarbamoyladenylate + diphosphate + H2O. In terms of biological role, required for the formation of a threonylcarbamoyl group on adenosine at position 37 (t(6)A37) in tRNAs that read codons beginning with adenine. Catalyzes the conversion of L-threonine, HCO(3)(-)/CO(2) and ATP to give threonylcarbamoyl-AMP (TC-AMP) as the acyladenylate intermediate, with the release of diphosphate. This Stenotrophomonas maltophilia (strain K279a) protein is Threonylcarbamoyl-AMP synthase.